The sequence spans 435 residues: F-box/FBD/LRR-repeat protein At1g51370 (435 aa).

An F-box domain is found at 18-64 (EDRISQLPEPLISEILFHLSTKDSVRTSALSTKWRYLWQSVPGLDLD). LRR repeat units follow at residues 123-148 (VHCF…RLRW), 170-195 (VSYP…ILFS), 234-259 (AKMY…DFVN), 262-287 (GRYQ…VISS), and 314-340 (RFYI…ILEM). Residues 354–406 (EPNVMVSTVPWCLVSSLKFVELKRSIPRYEGEMELVRYVLTNSTVLKKLRLNV) enclose the FBD domain.

The chain is F-box/FBD/LRR-repeat protein At1g51370 from Arabidopsis thaliana (Mouse-ear cress).